The primary structure comprises 206 residues: MGSGPRGALSLLLLLLAPPSRPAAGCPAPCSCAGTLVDCGRRGLTWASLPTAFPVDTTELVLTGNNLTALPPGLLDALPALRTAHLGANPWRCDCRLVPLRAWLAGRPERAPYRDLRCVAPPALRGRLLPYLAEDELRAACAPGPLCWGALAAQLALLGLGLLHALLLVLLLCRLRRLRARARARAAARLSLTDPLVAERAGTDES.

A signal peptide spans 1-25 (MGSGPRGALSLLLLLLAPPSRPAAG). Disulfide bonds link Cys-26/Cys-32 and Cys-30/Cys-39. Positions 27 to 55 (PAPCSCAGTLVDCGRRGLTWASLPTAFPV) constitute an LRRNT domain. Over 27 to 147 (PAPCSCAGTL…RAACAPGPLC (121 aa)) the chain is Extracellular. Residues 60-83 (LVLTGNNLTALPPGLLDALPALRT) form an LRR repeat. N-linked (GlcNAc...) asparagine glycosylation occurs at Asn-66. The region spanning 89-143 (NPWRCDCRLVPLRAWLAGRPERAPYRDLRCVAPPALRGRLLPYLAEDELRAACAP) is the LRRCT domain. Disulfide bonds link Cys-93/Cys-118 and Cys-95/Cys-141. A helical transmembrane segment spans residues 148–172 (WGALAAQLALLGLGLLHALLLVLLL). Residues 173–206 (CRLRRLRARARARAAARLSLTDPLVAERAGTDES) are Cytoplasmic-facing. Ser-191 is modified (phosphoserine; by PKA). The residue at position 193 (Thr-193) is a Phosphothreonine.

As to quaternary structure, two GP-Ib beta are disulfide-linked to one GP-Ib alpha. GP-IX is complexed with the GP-Ib heterodimer via a non covalent linkage. Interacts with TRAF4. Expressed in heart and brain.

It localises to the membrane. In terms of biological role, gp-Ib, a surface membrane protein of platelets, participates in the formation of platelet plugs by binding to von Willebrand factor, which is already bound to the subendothelium. This Homo sapiens (Human) protein is Platelet glycoprotein Ib beta chain (GP1BB).